We begin with the raw amino-acid sequence, 690 residues long: Guanylate cyclase soluble subunit alpha-1 (690 aa).

Serine 267 is subject to Phosphoserine. A Guanylate cyclase domain is found at 481–608; sequence TMLFSDIVGF…NNVTLANKFE (128 aa).

Belongs to the adenylyl cyclase class-4/guanylyl cyclase family. In terms of assembly, the active enzyme is formed by a heterodimer of an alpha and a beta subunit. Heterodimer with GUCY1B1. Mg(2+) serves as cofactor. It depends on Mn(2+) as a cofactor.

Its subcellular location is the cytoplasm. The enzyme catalyses GTP = 3',5'-cyclic GMP + diphosphate. With respect to regulation, activated by nitric oxide in the presence of magnesium or manganese ions. The sequence is that of Guanylate cyclase soluble subunit alpha-1 (GUCY1A1) from Canis lupus familiaris (Dog).